Reading from the N-terminus, the 98-residue chain is NADH-ubiquinone oxidoreductase chain 4L (98 aa).

Transmembrane regions (helical) follow at residues 1–21 (MSMV…GLLM), 29–49 (SLLC…VTIL), and 61–81 (IILL…LVMV).

This sequence belongs to the complex I subunit 4L family. Core subunit of respiratory chain NADH dehydrogenase (Complex I) which is composed of 45 different subunits.

Its subcellular location is the mitochondrion inner membrane. The catalysed reaction is a ubiquinone + NADH + 5 H(+)(in) = a ubiquinol + NAD(+) + 4 H(+)(out). In terms of biological role, core subunit of the mitochondrial membrane respiratory chain NADH dehydrogenase (Complex I) which catalyzes electron transfer from NADH through the respiratory chain, using ubiquinone as an electron acceptor. Part of the enzyme membrane arm which is embedded in the lipid bilayer and involved in proton translocation. This Pusa hispida (Ringed seal) protein is NADH-ubiquinone oxidoreductase chain 4L (MT-ND4L).